The primary structure comprises 975 residues: Nesprin-3 (975 aa).

Residues 1-925 (MTQQPQDDFD…LGSLFRRACC (925 aa)) are Cytoplasmic-facing. One copy of the Spectrin 1 repeat lies at 220–325 (REHEEYQAGV…WEEEEERLRG (106 aa)). Residues 617-645 (NHQHKMDQLSSDFQALQRSLEDLVDRCRQ) are a coiled coil. The stretch at 647–740 (VQEHCTFSHQ…RELAESWRAL (94 aa)) is one Spectrin 2 repeat. In terms of domain architecture, KASH spans 917–975 (GSLFRRACCVALPLQLLLLLFLLLLFLLPIREEDRSCTLANNFARSFTLMLRYNGPPPT). The helical; Anchor for type IV membrane protein transmembrane segment at 926-946 (VALPLQLLLLLFLLLLFLLPI) threads the bilayer. The Perinuclear space portion of the chain corresponds to 947–975 (REEDRSCTLANNFARSFTLMLRYNGPPPT).

It belongs to the nesprin family. As to quaternary structure, core component of LINC complexes which are composed of inner nuclear membrane SUN domain-containing proteins coupled to outer nuclear membrane KASH domain-containing nesprins. SUN and KASH domain-containing proteins seem to bind each other promiscuously; however, differentially expression of LINC complex constituents can give rise to specific assemblies. Interacts with SUN1 and SUN2; probably forming respective LINC complexes. Interacts with PLEC (via actin-binding domain). Interacts with DST. Interacts with SYNE1 via spectrin repeats. Interacts (via KASH domain) with TOR1A (ATP-bound); the interaction is required for SYNE3 nuclear envelope localization. Post-translationally, the disulfid bond with SUN1 or SUN2 is required for stability of the respective LINC complex under tensile forces. Expressed in aortic endothelial cells (at protein level).

The protein resides in the nucleus outer membrane. Its subcellular location is the nucleus envelope. It localises to the rough endoplasmic reticulum. In terms of biological role, as a component of the LINC (LInker of Nucleoskeleton and Cytoskeleton) complex involved in the connection between the nuclear lamina and the cytoskeleton. The nucleocytoplasmic interactions established by the LINC complex play an important role in the transmission of mechanical forces across the nuclear envelope and in nuclear movement and positioning. Probable anchoring protein which tethers the nucleus to the cytoskeleton by binding PLEC which can associate with the intermediate filament system. Plays a role in the regulation of aortic epithelial cell morphology, and is required for flow-induced centrosome polarization and directional migration in aortic endothelial cells. The protein is Nesprin-3 of Homo sapiens (Human).